The primary structure comprises 74 residues: UPF0435 protein GTNG_0390 (74 aa).

This sequence belongs to the UPF0435 family.

The chain is UPF0435 protein GTNG_0390 from Geobacillus thermodenitrificans (strain NG80-2).